We begin with the raw amino-acid sequence, 258 residues long: Mediator of RNA polymerase II transcription subunit 4 (258 aa).

Residues 52–101 (FRKMLELAEEQAKVEEAMDQLRAKVEVHDREIQKLQKSLKDAELILSTAI) adopt a coiled-coil conformation. 2 disordered regions span residues 164–208 (GKSE…EVPN) and 234–258 (LETR…SDSQ). Polar residues predominate over residues 166-190 (SEQNINGGTVTHQNSGMPSEQQRTL). Gly residues predominate over residues 194–204 (AGSGSGSGAGG). Residues 246–258 (STDSSSSSSSDSQ) show a composition bias toward low complexity.

Belongs to the Mediator complex subunit 4 family. As to quaternary structure, component of the Mediator complex, which includes at least MED4, MED6, MED14, MED17, MED18, MED20, MED21, MED23, MED24, MED27, MED30 and MED31. Interacts with MED10 and MED21.

It localises to the nucleus. Functionally, component of the Mediator complex, a coactivator involved in the regulated transcription of nearly all RNA polymerase II-dependent genes. Mediator functions as a bridge to convey information from gene-specific regulatory proteins to the basal RNA polymerase II transcription machinery. Mediator is recruited to promoters by direct interactions with regulatory proteins and serves as a scaffold for the assembly of a functional preinitiation complex with RNA polymerase II and the general transcription factors. Required for activated transcription of the MtnA, MtnB and MtnD genes. The sequence is that of Mediator of RNA polymerase II transcription subunit 4 (MED4) from Drosophila melanogaster (Fruit fly).